Here is a 572-residue protein sequence, read N- to C-terminus: Proline--tRNA ligase (572 aa).

It belongs to the class-II aminoacyl-tRNA synthetase family. ProS type 1 subfamily. As to quaternary structure, homodimer.

It is found in the cytoplasm. The catalysed reaction is tRNA(Pro) + L-proline + ATP = L-prolyl-tRNA(Pro) + AMP + diphosphate. Catalyzes the attachment of proline to tRNA(Pro) in a two-step reaction: proline is first activated by ATP to form Pro-AMP and then transferred to the acceptor end of tRNA(Pro). As ProRS can inadvertently accommodate and process non-cognate amino acids such as alanine and cysteine, to avoid such errors it has two additional distinct editing activities against alanine. One activity is designated as 'pretransfer' editing and involves the tRNA(Pro)-independent hydrolysis of activated Ala-AMP. The other activity is designated 'posttransfer' editing and involves deacylation of mischarged Ala-tRNA(Pro). The misacylated Cys-tRNA(Pro) is not edited by ProRS. In Enterobacter sp. (strain 638), this protein is Proline--tRNA ligase.